Here is an 868-residue protein sequence, read N- to C-terminus: Alanine--tRNA ligase (868 aa).

4 residues coordinate Zn(2+): His556, His560, Cys666, and His670.

Belongs to the class-II aminoacyl-tRNA synthetase family. It depends on Zn(2+) as a cofactor.

It localises to the cytoplasm. It catalyses the reaction tRNA(Ala) + L-alanine + ATP = L-alanyl-tRNA(Ala) + AMP + diphosphate. Its function is as follows. Catalyzes the attachment of alanine to tRNA(Ala) in a two-step reaction: alanine is first activated by ATP to form Ala-AMP and then transferred to the acceptor end of tRNA(Ala). Also edits incorrectly charged Ser-tRNA(Ala) and Gly-tRNA(Ala) via its editing domain. The polypeptide is Alanine--tRNA ligase (Elusimicrobium minutum (strain Pei191)).